We begin with the raw amino-acid sequence, 267 residues long: Phosphoinositide-3-kinase-interacting protein 1 (267 aa).

The first 21 residues, 1-21 (MLLAWVHTFLLSNMLLAEAYG), serve as a signal peptide directing secretion. Topologically, residues 22–172 (SGGCFWDNGH…NSKEKKDLGT (151 aa)) are extracellular. Residues 24–101 (GCFWDNGHLY…EKRPCEDLRC (78 aa)) enclose the Kringle domain. Disulfide bonds link Cys25–Cys101, Cys46–Cys82, and Cys70–Cys96. Over residues 91–101 (PEKRPCEDLRC) the composition is skewed to basic and acidic residues. The segment at 91–122 (PEKRPCEDLRCPETTSQAPPPPPPSSTTELEE) is disordered. Residues 173–193 (LGYVLGVTMTVIIIAIGVGIV) traverse the membrane as a helical segment. Residues 194–267 (LGYTYKRGKD…LTDQAGTPGA (74 aa)) lie on the Cytoplasmic side of the membrane.

Its subcellular location is the cell membrane. Negative regulator of hepatic phosphatidylinositol 3-kinase (PI3K) activity. The protein is Phosphoinositide-3-kinase-interacting protein 1 (Pik3ip1) of Rattus norvegicus (Rat).